Reading from the N-terminus, the 713-residue chain is Transcription activator of gluconeogenesis CPC735_053490 (713 aa).

The disordered stretch occupies residues 1 to 70; it reads MTANAINGPV…NAKDPLRPRR (70 aa). The span at 19 to 56 shows a compositional bias: polar residues; it reads GDNNKSADTTMADQGTRPESQPQGQNNGAKPQNGQTKP. The segment at residues 77 to 105 is a DNA-binding region (zn(2)-C6 fungal-type); sequence CFACQRAHLTCGDERPCQRCIKRGIQNAC. Positions 145 to 159 are enriched in polar residues; that stretch reads PLTRNGSNSKTNFYP. 4 disordered regions span residues 145–229, 274–318, 541–564, and 623–665; these read PLTR…ASGQ, GAGE…LFGD, GGSSGAMSGVTSRGSFTPRTGMDI, and GTTS…QRKW. Positions 160–171 are enriched in low complexity; it reads QQQSSFNNFYQN. Over residues 191–212 the composition is skewed to polar residues; that stretch reads FPSQSPVSPTFNMTANPAASGN. The segment covering 213 to 229 has biased composition (low complexity); it reads QGLPSSLSASNSNASGQ. Composition is skewed to polar residues over residues 295–312, 541–558, and 649–659; these read SGTYTAGSNFGESPTGQP, GGSSGAMSGVTSRGSFTP, and GASNGQSQHSL.

This sequence belongs to the ERT1/acuK family.

It localises to the nucleus. Functionally, transcription factor which regulates nonfermentable carbon utilization. Activator of gluconeogenetic genes. The polypeptide is Transcription activator of gluconeogenesis CPC735_053490 (Coccidioides posadasii (strain C735) (Valley fever fungus)).